We begin with the raw amino-acid sequence, 163 residues long: Large ribosomal subunit protein uL10 (163 aa).

Belongs to the universal ribosomal protein uL10 family. As to quaternary structure, part of the ribosomal stalk of the 50S ribosomal subunit. The N-terminus interacts with L11 and the large rRNA to form the base of the stalk. The C-terminus forms an elongated spine to which L12 dimers bind in a sequential fashion forming a multimeric L10(L12)X complex.

Its function is as follows. Forms part of the ribosomal stalk, playing a central role in the interaction of the ribosome with GTP-bound translation factors. This Pasteurella multocida (strain Pm70) protein is Large ribosomal subunit protein uL10 (rplJ).